The sequence spans 359 residues: Phospho-N-acetylmuramoyl-pentapeptide-transferase (359 aa).

Transmembrane regions (helical) follow at residues 24-44, 72-92, 100-120, 134-154, 170-190, 197-217, 234-254, 261-281, 289-309, and 336-356; these read FRAL…SPIF, FVPS…SILL, TWIM…DDFV, MLGQ…VMHI, LGYF…NAVN, GLAI…SYVA, AGEL…FLWF, MFMG…LAIM, IIAG…VSVF, and KIVV…IATL.

Belongs to the glycosyltransferase 4 family. MraY subfamily. The cofactor is Mg(2+).

The protein localises to the cell inner membrane. The enzyme catalyses UDP-N-acetyl-alpha-D-muramoyl-L-alanyl-gamma-D-glutamyl-meso-2,6-diaminopimeloyl-D-alanyl-D-alanine + di-trans,octa-cis-undecaprenyl phosphate = di-trans,octa-cis-undecaprenyl diphospho-N-acetyl-alpha-D-muramoyl-L-alanyl-D-glutamyl-meso-2,6-diaminopimeloyl-D-alanyl-D-alanine + UMP. It participates in cell wall biogenesis; peptidoglycan biosynthesis. Catalyzes the initial step of the lipid cycle reactions in the biosynthesis of the cell wall peptidoglycan: transfers peptidoglycan precursor phospho-MurNAc-pentapeptide from UDP-MurNAc-pentapeptide onto the lipid carrier undecaprenyl phosphate, yielding undecaprenyl-pyrophosphoryl-MurNAc-pentapeptide, known as lipid I. This chain is Phospho-N-acetylmuramoyl-pentapeptide-transferase, found in Hydrogenobaculum sp. (strain Y04AAS1).